Consider the following 126-residue polypeptide: Glycine cleavage system H protein (126 aa).

In terms of domain architecture, Lipoyl-binding spans 22–104 (VATIGITEYA…YEKAWMVKIE (83 aa)). N6-lipoyllysine is present on Lys63.

This sequence belongs to the GcvH family. As to quaternary structure, the glycine cleavage system is composed of four proteins: P, T, L and H. (R)-lipoate is required as a cofactor.

Functionally, the glycine cleavage system catalyzes the degradation of glycine. The H protein shuttles the methylamine group of glycine from the P protein to the T protein. In terms of biological role, is also involved in protein lipoylation via its role as an octanoyl/lipoyl carrier protein intermediate. This chain is Glycine cleavage system H protein, found in Staphylococcus epidermidis (strain ATCC 35984 / DSM 28319 / BCRC 17069 / CCUG 31568 / BM 3577 / RP62A).